A 366-amino-acid polypeptide reads, in one-letter code: Histidinol-phosphate aminotransferase 1 (366 aa).

At Lys-226 the chain carries N6-(pyridoxal phosphate)lysine.

Belongs to the class-II pyridoxal-phosphate-dependent aminotransferase family. Histidinol-phosphate aminotransferase subfamily. As to quaternary structure, homodimer. Pyridoxal 5'-phosphate serves as cofactor.

It carries out the reaction L-histidinol phosphate + 2-oxoglutarate = 3-(imidazol-4-yl)-2-oxopropyl phosphate + L-glutamate. It functions in the pathway amino-acid biosynthesis; L-histidine biosynthesis; L-histidine from 5-phospho-alpha-D-ribose 1-diphosphate: step 7/9. The protein is Histidinol-phosphate aminotransferase 1 of Mannheimia succiniciproducens (strain KCTC 0769BP / MBEL55E).